A 345-amino-acid chain; its full sequence is Gibberellin 2-beta-dioxygenase 2 (345 aa).

In terms of domain architecture, Fe2OG dioxygenase spans 170–285 (HSDSLLRINH…RMSMMYFAAP (116 aa)). 3 residues coordinate Fe cation: His-209, Asp-211, and His-266. The active site involves Arg-276.

This sequence belongs to the iron/ascorbate-dependent oxidoreductase family. GA2OX subfamily. Fe cation is required as a cofactor. Predominantly expressed in leaves.

The catalysed reaction is gibberellin A1 + 2-oxoglutarate + O2 = gibberellin A8 + succinate + CO2. It functions in the pathway plant hormone biosynthesis; gibberellin biosynthesis. Catalyzes the 2-beta-hydroxylation of several biologically active gibberellins, leading to the homeostatic regulation of their endogenous level. Catabolism of gibberellins (GAs) plays a central role in plant development. Converts GA9/GA20 to GA51/GA29 and GA4/GA1 to GA34/GA8. In Pisum sativum (Garden pea), this protein is Gibberellin 2-beta-dioxygenase 2 (GA2OX2).